The sequence spans 641 residues: 1,3-beta-glucanosyltransferase PGA5 (641 aa).

Residues Met1 to Ser23 form the signal peptide. A glycan (N-linked (GlcNAc...) asparagine) is linked at Asn25. A disulfide bridge links Cys106 with Cys135. Positions 124, 192, 193, 234, and 239 each coordinate (1,3-beta-D-glucosyl)n. Glu193 serves as the catalytic Proton donor. Cystine bridges form between Cys248/Cys390, Cys276/Cys307, Cys424/Cys474, Cys426/Cys528, Cys433/Cys498, and Cys451/Cys456. The Nucleophile role is filled by Glu304. Residue Tyr336 participates in (1,3-beta-D-glucosyl)n binding. Residues Lys535 to Gly613 form a disordered region. Basic and acidic residues predominate over residues Lys571–Ile581. Positions Glu582–Glu593 are enriched in acidic residues. Residues Lys596–Ser610 show a composition bias toward polar residues. N-linked (GlcNAc...) asparagine glycosylation is present at Asn621. Residue Asp622 is the site of GPI-anchor amidated aspartate attachment. A propeptide spans Ser623 to Ile641 (removed in mature form).

This sequence belongs to the glycosyl hydrolase 72 family.

Its subcellular location is the cell membrane. In terms of biological role, splits internally a 1,3-beta-glucan molecule and transfers the newly generated reducing end (the donor) to the non-reducing end of another 1,3-beta-glucan molecule (the acceptor) forming a 1,3-beta linkage, resulting in the elongation of 1,3-beta-glucan chains in the cell wall. Involved in spore wall assembly. The chain is 1,3-beta-glucanosyltransferase PGA5 (PGA5) from Candida albicans (strain SC5314 / ATCC MYA-2876) (Yeast).